A 183-amino-acid chain; its full sequence is Calmodulin-like protein 3 (183 aa).

EF-hand domains lie at E7–S42, P43–D78, G80–P115, and L116–Q151. D20, D22, D24, T26, E31, D56, D58, S60, S62, E67, D93, D95, N97, E104, D129, D131, D133, Q135, and E140 together coordinate Ca(2+). The disordered stretch occupies residues M154–L183. Residues C173 and C174 are each lipidated (S-palmitoyl cysteine). Residue C180 is modified to Cysteine methyl ester. C180 is lipidated: S-farnesyl cysteine. A propeptide spans T181–L183 (removed in mature form).

This sequence belongs to the calmodulin family.

It is found in the membrane. Functionally, potential calcium sensor. The sequence is that of Calmodulin-like protein 3 (CML3) from Oryza sativa subsp. japonica (Rice).